The chain runs to 285 residues: Bifunctional protein FolD (285 aa).

NADP(+) contacts are provided by residues 165–167 (GRS) and S190.

Belongs to the tetrahydrofolate dehydrogenase/cyclohydrolase family. Homodimer.

The enzyme catalyses (6R)-5,10-methylene-5,6,7,8-tetrahydrofolate + NADP(+) = (6R)-5,10-methenyltetrahydrofolate + NADPH. The catalysed reaction is (6R)-5,10-methenyltetrahydrofolate + H2O = (6R)-10-formyltetrahydrofolate + H(+). Its pathway is one-carbon metabolism; tetrahydrofolate interconversion. Functionally, catalyzes the oxidation of 5,10-methylenetetrahydrofolate to 5,10-methenyltetrahydrofolate and then the hydrolysis of 5,10-methenyltetrahydrofolate to 10-formyltetrahydrofolate. The sequence is that of Bifunctional protein FolD from Burkholderia pseudomallei (strain 1710b).